The primary structure comprises 175 residues: Transcriptional repressor NrdR (175 aa).

A zinc finger spans residues 3-32 (CPYCSHPDTKVIDSRDVDDGVRRRRECVVC). Positions 47–137 (LFVVKKDQRR…VYREFTDITQ (91 aa)) constitute an ATP-cone domain.

It belongs to the NrdR family. It depends on Zn(2+) as a cofactor.

Functionally, negatively regulates transcription of bacterial ribonucleotide reductase nrd genes and operons by binding to NrdR-boxes. This is Transcriptional repressor NrdR from Dehalococcoides mccartyi (strain ATCC BAA-2266 / KCTC 15142 / 195) (Dehalococcoides ethenogenes (strain 195)).